Consider the following 228-residue polypeptide: Cytidylate kinase (228 aa).

Position 12–20 (12–20 (GPSGAGKGT)) interacts with ATP.

Belongs to the cytidylate kinase family. Type 1 subfamily.

It is found in the cytoplasm. It carries out the reaction CMP + ATP = CDP + ADP. It catalyses the reaction dCMP + ATP = dCDP + ADP. This is Cytidylate kinase from Photobacterium profundum (strain SS9).